The chain runs to 441 residues: Serine carboxypeptidase-like 4 (441 aa).

A signal peptide spans 1-29 (MANNNVYSVLKSLLLLLHLVFLSKQHVDS). Disulfide bonds link C88–C331, C252–C266, and C290–C297. N-linked (GlcNAc...) asparagine glycosylation occurs at N109. S184 is a catalytic residue. N350 carries N-linked (GlcNAc...) asparagine glycosylation. D366 is an active-site residue. N382 carries N-linked (GlcNAc...) asparagine glycosylation. The active site involves H419.

The protein belongs to the peptidase S10 family. As to expression, ubiquitous.

The protein resides in the secreted. Functionally, probable carboxypeptidase. In Arabidopsis thaliana (Mouse-ear cress), this protein is Serine carboxypeptidase-like 4 (SCPL4).